Reading from the N-terminus, the 250-residue chain is DNA repair protein RecO (250 aa).

Belongs to the RecO family.

In terms of biological role, involved in DNA repair and RecF pathway recombination. This Lactobacillus acidophilus (strain ATCC 700396 / NCK56 / N2 / NCFM) protein is DNA repair protein RecO.